The following is a 309-amino-acid chain: Serine/threonine-protein phosphatase 4 catalytic subunit (309 aa).

4 residues coordinate Mn(2+): Asp52, His54, Asp80, and Asn112. The active-site Proton donor is His113. Residues His162 and His236 each contribute to the Mn(2+) site. Leu309 is subject to Leucine methyl ester.

It belongs to the PPP phosphatase family. PP-4 (PP-X) subfamily. As to quaternary structure, catalytic subunit of the histone H2A phosphatase complex (HTP-C) containing PPH3, PSY2 and PSY4. The cofactor is Mn(2+).

It is found in the cytoplasm. The protein localises to the nucleus. It carries out the reaction O-phospho-L-seryl-[protein] + H2O = L-seryl-[protein] + phosphate. The catalysed reaction is O-phospho-L-threonyl-[protein] + H2O = L-threonyl-[protein] + phosphate. Functionally, forms the histone H2A phosphatase complex in association with the regulatory subunits PSY2 and PSY4, which dephosphorylates H2AS128ph (gamma-H2A) that has been displaced from sites of DNA lesions in the double-stranded DNA break repair process. Dephosphorylation is necessary for efficient recovery from the DNA damage checkpoint. The protein is Serine/threonine-protein phosphatase 4 catalytic subunit (PPH3) of Candida glabrata (strain ATCC 2001 / BCRC 20586 / JCM 3761 / NBRC 0622 / NRRL Y-65 / CBS 138) (Yeast).